The sequence spans 86 residues: OMEGA-stichotoxin-Shd4a (86 aa).

The first 23 residues, 1–23 (MASFRTLFACVVILCCVLWSSMA), serve as a signal peptide directing secretion. The propeptide occupies 24-36 (RYGEDMEVETEMN). One can recognise an EGF-like domain in the interval 40–82 (EGVRCTGQHASSFCLNGGTCRHIASLGEYYCICPGDYTGHRCD). 3 disulfides stabilise this stretch: cysteine 44–cysteine 59, cysteine 53–cysteine 70, and cysteine 72–cysteine 81.

This sequence belongs to the EGF domain peptide family.

The protein resides in the secreted. It is found in the nematocyst. Has both toxic and EGF activity. Its EGF activity consists of rounding cells (morphological change) and inducing tyrosine phosphorylation of the EGFR in A431 cells, but with a lower potency that human EGF. This is OMEGA-stichotoxin-Shd4a from Stichodactyla haddoni (Saddle carpet anemone).